A 57-amino-acid chain; its full sequence is MLKWALIFFVISIIAGFFGFSGVSAATATIARVLFGIALVIFLIFLVLALMAGQAVL.

2 helical membrane-spanning segments follow: residues 4–24 (WALI…SGVS) and 33–53 (VLFG…LMAG).

It belongs to the UPF0391 family.

Its subcellular location is the cell membrane. This Rhizobium etli (strain CIAT 652) protein is UPF0391 membrane protein RHECIAT_CH0003936.